The primary structure comprises 611 residues: Probable cysteine desulfurase 1 (611 aa).

The interval 1-208 is cargo-loading domain; sequence MRATQLYAAS…HEMVDVFDIQ (208 aa). Lys428 is subject to N6-(pyridoxal phosphate)lysine. The active-site Cysteine persulfide intermediate is Cys566.

Belongs to the class-V pyridoxal-phosphate-dependent aminotransferase family. Csd subfamily. In terms of assembly, there are 1-2 copies of this protein in each type 2A encapsulin shell. It depends on pyridoxal 5'-phosphate as a cofactor.

The protein localises to the encapsulin nanocompartment. It carries out the reaction (sulfur carrier)-H + L-cysteine = (sulfur carrier)-SH + L-alanine. Cargo protein of a type 2A encapsulin nanocompartment involved in sulfur metabolism. Cysteine desulfurases mobilize the sulfur from L-cysteine to yield L-alanine, an essential step in sulfur metabolism for biosynthesis of a variety of sulfur-containing biomolecules. This chain is Probable cysteine desulfurase 1, found in Mycobacterium leprae (strain TN).